Consider the following 670-residue polypeptide: MTNIQTQLDNLRKTLRQYEYEYHVLDNPSVPDSEYDRLFHQLKALELEHPEFLTSDSPTQRVGAKPLSGFSQIRHEIPMLSLDNAFSDAEFNAFVKRIEDRLILLPKPLTFCCEPKLDGLAVSILYVNGELTQAATRGDGTTGEDITANIRTIRNVPLQLLTDNPPARLEVRGEVFMPHAGFERLNKYALEHNEKTFANPRNAAAGSLRQLDPNITSKRPLVLNAYGIGIAEGVDLPTTHYARLQWLKSIGIPVNPEIRLCNGADEVLGFYRDIQNKRSSLGYDIDGTVLKINDIALQNELGFISKAPRWAIAYKFPAQEELTLLNDVEFQVGRTGAITPVAKLEPVFVAGVTVSNATLHNGDEIERLNIAIGDTVVIRRAGDVIPQIIGVLHERRPDNAKPIIFPTNCPVCDSQIIRIEGEAVARCTGGLFCAAQRKEALKHFVSRKAMDIDGVGGKLIEQLVDRELIHTPADLFKLDLTTLTRLERMGAKSAENALNSLENAKSTTLARFIFALGIREVGEATALNLANHFKTLDALKDANLEELQQVPDVGEVVANRIFIFWREAHNVAVVEDLIAQGVHWETVEVKEASENLFKDKTVVLTGTLTQMGRNEAKALLQQLGAKVSGSVSSKTDFVIAGDAAGSKLAKAQELNITVLTEEEFLAQITR.

Residues 32-36 (DSEYD), 81-82 (SL), and E114 contribute to the NAD(+) site. The N6-AMP-lysine intermediate role is filled by K116. NAD(+) is bound by residues R137, E174, K291, and K315. Residues C409, C412, C427, and C433 each contribute to the Zn(2+) site. Positions 592–670 (ASENLFKDKT…EEEFLAQITR (79 aa)) constitute a BRCT domain.

The protein belongs to the NAD-dependent DNA ligase family. LigA subfamily. Mg(2+) is required as a cofactor. Mn(2+) serves as cofactor.

It carries out the reaction NAD(+) + (deoxyribonucleotide)n-3'-hydroxyl + 5'-phospho-(deoxyribonucleotide)m = (deoxyribonucleotide)n+m + AMP + beta-nicotinamide D-nucleotide.. Its function is as follows. DNA ligase that catalyzes the formation of phosphodiester linkages between 5'-phosphoryl and 3'-hydroxyl groups in double-stranded DNA using NAD as a coenzyme and as the energy source for the reaction. It is essential for DNA replication and repair of damaged DNA. This is DNA ligase from Haemophilus influenzae (strain ATCC 51907 / DSM 11121 / KW20 / Rd).